A 173-amino-acid polypeptide reads, in one-letter code: Flavodoxin 2 (173 aa).

One can recognise a Flavodoxin-like domain in the interval 3–165 (MGLFYGSSTC…RIQTWCEQIL (163 aa)).

Belongs to the flavodoxin family. FMN is required as a cofactor.

Its function is as follows. Low-potential electron donor to a number of redox enzymes. This Salmonella typhi protein is Flavodoxin 2 (fldB).